The following is a 325-amino-acid chain: Beta-ketoacyl-[acyl-carrier-protein] synthase III (325 aa).

Residues cysteine 112 and histidine 250 contribute to the active site. The segment at 251–255 (QANIR) is ACP-binding. The active site involves asparagine 280.

The protein belongs to the thiolase-like superfamily. FabH family. Homodimer.

The protein resides in the cytoplasm. It catalyses the reaction malonyl-[ACP] + acetyl-CoA + H(+) = 3-oxobutanoyl-[ACP] + CO2 + CoA. The protein operates within lipid metabolism; fatty acid biosynthesis. Functionally, catalyzes the condensation reaction of fatty acid synthesis by the addition to an acyl acceptor of two carbons from malonyl-ACP. Catalyzes the first condensation reaction which initiates fatty acid synthesis and may therefore play a role in governing the total rate of fatty acid production. Possesses both acetoacetyl-ACP synthase and acetyl transacylase activities. Its substrate specificity determines the biosynthesis of branched-chain and/or straight-chain of fatty acids. The polypeptide is Beta-ketoacyl-[acyl-carrier-protein] synthase III (Streptococcus mutans serotype c (strain ATCC 700610 / UA159)).